Consider the following 152-residue polypeptide: 1,4-dihydroxy-2-naphthoyl-CoA hydrolase (152 aa).

The active site involves D20.

The protein belongs to the 4-hydroxybenzoyl-CoA thioesterase family. DHNA-CoA hydrolase subfamily.

The enzyme catalyses 1,4-dihydroxy-2-naphthoyl-CoA + H2O = 1,4-dihydroxy-2-naphthoate + CoA + H(+). Its pathway is cofactor biosynthesis; phylloquinone biosynthesis. It functions in the pathway quinol/quinone metabolism; 1,4-dihydroxy-2-naphthoate biosynthesis; 1,4-dihydroxy-2-naphthoate from chorismate: step 7/7. Catalyzes the hydrolysis of 1,4-dihydroxy-2-naphthoyl-CoA (DHNA-CoA) to 1,4-dihydroxy-2-naphthoate (DHNA), a reaction involved in phylloquinone (vitamin K1) biosynthesis. In Parasynechococcus marenigrum (strain WH8102), this protein is 1,4-dihydroxy-2-naphthoyl-CoA hydrolase.